A 199-amino-acid polypeptide reads, in one-letter code: NAD(P)H dehydrogenase (quinone) (199 aa).

Residues 4-190 (VLVLYYSAYG…AGARYQGQVI (187 aa)) enclose the Flavodoxin-like domain. Residues 10 to 15 (SAYGHI) and 78 to 80 (TRF) each bind FMN. Tyr-12 lines the NAD(+) pocket. Residue Trp-98 coordinates substrate. Residues 113 to 119 (STATQHG) and His-134 contribute to the FMN site.

Belongs to the WrbA family. The cofactor is FMN.

The enzyme catalyses a quinone + NADH + H(+) = a quinol + NAD(+). It carries out the reaction a quinone + NADPH + H(+) = a quinol + NADP(+). The protein is NAD(P)H dehydrogenase (quinone) of Rhodopseudomonas palustris (strain BisA53).